The chain runs to 242 residues: MTKQLKLSALFVALLASGTAVAGEASVQGYTVSGQSNEIVRNNYGECWKNAYFDKASQGRVECGDAVAAPEPEPEPEPAPAPVVVVEQAPQYVDETISLSAKTLFGFDKDSLRAEAQDNLKVLAQRLGQTNIQSVRVEGHTDFMGSDKYNQALSERRAYVVANNLVSNGVPVSRISAVGLGESQAQMTQVCEAEVAKLGAKVSKAKKREALIACIEPDRRVDVKIRSIVTRQVVPAHNHHQH.

The signal sequence occupies residues 1–22 (MTKQLKLSALFVALLASGTAVA). 7 repeat units span residues 69 to 70 (AP), 71 to 72 (EP), 73 to 74 (EP), 75 to 76 (EP), 77 to 78 (EP), 79 to 80 (AP), and 81 to 82 (AP). Positions 69-82 (APEPEPEPEPAPAP) are 7 X 2 AA tandem repeats of X-P. An OmpA-like domain is found at 92 to 229 (YVDETISLSA…RVDVKIRSIV (138 aa)). Cys191 and Cys214 are joined by a disulfide.

It belongs to the outer membrane OOP (TC 1.B.6) superfamily.

The protein resides in the cell outer membrane. In Neisseria meningitidis serogroup A / serotype 4A (strain DSM 15465 / Z2491), this protein is Outer membrane protein class 4 (rmpM).